The chain runs to 617 residues: MFPHLKGHGQRVNLQLLQEAACRELLQQLDRIEGSKVIVLDETMIGPLDLVTRPKLFADRGIRLLALKPELHLPREVANVVYVMRPRVALMEQLAAHVKAGGRAAAGRQYHILFAPRRSCLCVSQLEVSGVLGSFGNIEELAWNYLPLDVDLVSMEMPNAFRDVSVDGDTSSLYQAAVGLVQLQRLYGRIPKIYGKGEFAHRVWEHAKQLGRDERTLYNGDKGVVDQLILLDRSIDLLSPLATQLTYEGLIDEFYGIRQNKLTLPAENFPSDGALPGGGGSGPRVEESQSLLGDTEKKTILLHSGEQLYAELRNKHFNEVTKLLARKAREIHVQMHATSQDKSVQEIKSFVENLLPQLMAQKKATSEHTAIAGLLHEQVNAVRFADDLAAEQEFMVCADIDKPSAYIEDLIACRVELNRVLRLICMQCHAASGFKEKLLNHYKRELVHVYGLEVLLTISNLEKSGLLHLQTESRAYSVLRKTLHLTVDDNVEIEPKDISYVHSFYAPLTARIVEHSLKPLGWQTLKSQINNLPGPTFEDFQAQLVGIGGRHTVTTVSEGSLLNVPRVVLVCFVGGCTFAEIAALRFLAAQEDNNVEFLIATTKVVNKHSFLDSLMSS.

Positions 268 to 287 (NFPSDGALPGGGGSGPRVEE) are disordered.

It belongs to the STXBP/unc-18/SEC1 family. In terms of assembly, component of the class C core vacuole/endosome tethering (CORVET) complex composed of at least Vps8, dor/Vps18, car/Vps33A and Vps16A; unlike in other species, Vps11 is not part of the Drosophila complex. Due to the reduced number of components the Drosophila CORVET complex is often referred to as the miniCORVET complex. Interacts with ema. Component of the homotypic fusion and vacuole protein sorting (HOPS) complex, composed of Vps16A, car/Vps33A, dor/Vps18, Vps39, Vps11 and lt/Vps41. The tethering complex core made up of Vps16A, car/Vps33A and dor/Vps18 and shared by both HOPS and CORVET, preferentially associates with CORVET specific Vps8 over HOPS specific lt/Vps41. Interacts with Syx17 (via SNARE domain); the interaction requires Vps16A, may involve additional components of the HOPS complex and may promote assembly of the Syx17-Snap29-Vamp7 trans-SNARE complex.

It is found in the early endosome. The protein localises to the late endosome membrane. The protein resides in the lysosome membrane. In terms of biological role, core component of the class C core vacuole/endosome tethering (CORVET) and the homotypic fusion and vacuole protein sorting (HOPS) tethering complexes involved in endo-lysosomal vesicle trafficking and lysosome biogenesis. The CORVET complex facilitates docking and fusion of endosomal vesicles during endosome maturation, acts upstream of HOPS, but is not involved in autophagic flux. The CORVET complex may cooperate with the early endosomal tether Rbsn-5 to mediate endosomal fusion. The HOPS complex facilitates docking and fusion of lysosomes with late endosomes and several other types of vesicles. The HOPS complex is also involved in autophagy and crinophagy (the elimination of unused secretory granules through their fusion with lysosomes). The HOPS complex probably instigates autophagosome-lysosome fusion by binding autophagosome associated Syx17/syntaxin 17 and promoting assembly of the trans-SNARE complex. Independent of Syx17/syntaxin 17 HOPS is involved in biosynthetic transport to lysosomes and lysosome-related organelles such as eye-pigment granules. Required for endocytic degradation of boss/bride of sevenless and N/Notch in developing ommatidia. The polypeptide is Vacuolar protein sorting-associated protein 33A (Drosophila melanogaster (Fruit fly)).